The primary structure comprises 149 residues: Extracellular protease inhibitor 1 (149 aa).

An N-terminal signal peptide occupies residues 1–16; it reads MKSALLFTLVVAAVHA. Kazal-like domains lie at 29–86 and 88–141; these read ESNE…SSTG and QPPS…ACVG. Disulfide bonds link C35–C65 and C39–C58. An N-linked (GlcNAc...) asparagine glycan is attached at N67. Disulfide bonds link C94/C124, C98/C117, and C106/C139.

Interacts with host subtilisin-like protease P69B.

It localises to the secreted. Secreted effector that interacts with and inhibits the pathogenesis-related P69B subtilisin-like serine protease of host tomato. Inhibition of host proteases by a pathogen extracellular protease inhibitor forms a specific type of defense-counterdefense mechanism between plants and microbial pathogens. This is Extracellular protease inhibitor 1 from Phytophthora infestans (Potato late blight agent).